The primary structure comprises 68 residues: DNA-directed RNA polymerase subunit Rpo10 (68 aa).

Zn(2+) is bound by residues Cys-7, Cys-10, Cys-44, and Cys-45.

This sequence belongs to the archaeal Rpo10/eukaryotic RPB10 RNA polymerase subunit family. Part of the RNA polymerase complex. Requires Zn(2+) as cofactor.

It is found in the cytoplasm. It carries out the reaction RNA(n) + a ribonucleoside 5'-triphosphate = RNA(n+1) + diphosphate. Functionally, DNA-dependent RNA polymerase (RNAP) catalyzes the transcription of DNA into RNA using the four ribonucleoside triphosphates as substrates. The polypeptide is DNA-directed RNA polymerase subunit Rpo10 (Methanococcus maripaludis (strain C5 / ATCC BAA-1333)).